The chain runs to 400 residues: Endoglucanase 5A (400 aa).

Residues 1–26 form the signal peptide; that stretch reads MKKITTIFVVLLMTVALFSIGNTTAA. Substrate-binding positions include histidine 61, 65-66, tyrosine 92, and histidine 127; that span reads WY. Glutamate 165 (proton donor) is an active-site residue. Tyrosine 228 contributes to the substrate binding site. Catalysis depends on glutamate 254, which acts as the Nucleophile. Residues 260–261, tryptophan 288, and 293–295 each bind substrate; these read AT and KDE. The tract at residues 328–363 is disordered; it reads ESASIPPSDPTPPSDPGEPDPTPPSDPGEYPAWDPN. Over residues 334–353 the composition is skewed to pro residues; it reads PSDPTPPSDPGEPDPTPPSD. Residues 357–396 form the Chitin-binding type-3 domain; it reads YPAWDPNQIYTNEIVYHNGQLWQAKWWTQNQEPGDPYGPW.

The protein belongs to the glycosyl hydrolase 5 (cellulase A) family. Monomer.

Its subcellular location is the secreted. It carries out the reaction Endohydrolysis of (1-&gt;4)-beta-D-glucosidic linkages in cellulose, lichenin and cereal beta-D-glucans.. This Salipaludibacillus agaradhaerens (Bacillus agaradhaerens) protein is Endoglucanase 5A (cel5A).